The following is a 290-amino-acid chain: GTPase Era (290 aa).

Positions 2–169 (KSGFVSIIGR…KDKIYENLNE (168 aa)) constitute an Era-type G domain. The interval 10 to 17 (GRPSTGKS) is G1. GTP is bound at residue 10–17 (GRPSTGKS). Residues 36 to 40 (QTTRN) are G2. The tract at residues 57-60 (DTPG) is G3. Residues 57–61 (DTPGF) and 119–122 (NKID) contribute to the GTP site. The interval 119 to 122 (NKID) is G4. Positions 148 to 150 (ISA) are G5. In terms of domain architecture, KH type-2 spans 200–276 (LKEELPYSIY…NLFLQVKLRK (77 aa)).

This sequence belongs to the TRAFAC class TrmE-Era-EngA-EngB-Septin-like GTPase superfamily. Era GTPase family. As to quaternary structure, monomer.

The protein resides in the cytoplasm. It localises to the cell inner membrane. In terms of biological role, an essential GTPase that binds both GDP and GTP, with rapid nucleotide exchange. Plays a role in 16S rRNA processing and 30S ribosomal subunit biogenesis and possibly also in cell cycle regulation and energy metabolism. The polypeptide is GTPase Era (Borrelia duttonii (strain Ly)).